Reading from the N-terminus, the 180-residue chain is ATP synthase subunit delta (180 aa).

The protein belongs to the ATPase delta chain family. As to quaternary structure, F-type ATPases have 2 components, F(1) - the catalytic core - and F(0) - the membrane proton channel. F(1) has five subunits: alpha(3), beta(3), gamma(1), delta(1), epsilon(1). F(0) has three main subunits: a(1), b(2) and c(10-14). The alpha and beta chains form an alternating ring which encloses part of the gamma chain. F(1) is attached to F(0) by a central stalk formed by the gamma and epsilon chains, while a peripheral stalk is formed by the delta and b chains.

The protein localises to the cell membrane. F(1)F(0) ATP synthase produces ATP from ADP in the presence of a proton or sodium gradient. F-type ATPases consist of two structural domains, F(1) containing the extramembraneous catalytic core and F(0) containing the membrane proton channel, linked together by a central stalk and a peripheral stalk. During catalysis, ATP synthesis in the catalytic domain of F(1) is coupled via a rotary mechanism of the central stalk subunits to proton translocation. In terms of biological role, this protein is part of the stalk that links CF(0) to CF(1). It either transmits conformational changes from CF(0) to CF(1) or is implicated in proton conduction. The polypeptide is ATP synthase subunit delta (Limosilactobacillus reuteri (strain DSM 20016) (Lactobacillus reuteri)).